Reading from the N-terminus, the 275-residue chain is NADPH-dependent 7-cyano-7-deazaguanine reductase (275 aa).

81 to 83 (IES) contributes to the substrate binding site. 83–84 (SK) is an NADPH binding site. The active-site Thioimide intermediate is the Cys-181. Residue Asp-188 is the Proton donor of the active site. 220-221 (HE) provides a ligand contact to substrate. Residue 249–250 (RG) coordinates NADPH.

Belongs to the GTP cyclohydrolase I family. QueF type 2 subfamily. As to quaternary structure, homodimer.

Its subcellular location is the cytoplasm. The catalysed reaction is 7-aminomethyl-7-carbaguanine + 2 NADP(+) = 7-cyano-7-deazaguanine + 2 NADPH + 3 H(+). It functions in the pathway tRNA modification; tRNA-queuosine biosynthesis. In terms of biological role, catalyzes the NADPH-dependent reduction of 7-cyano-7-deazaguanine (preQ0) to 7-aminomethyl-7-deazaguanine (preQ1). This Xylella fastidiosa (strain M12) protein is NADPH-dependent 7-cyano-7-deazaguanine reductase.